The chain runs to 398 residues: 1-deoxy-D-xylulose 5-phosphate reductoisomerase (398 aa).

5 residues coordinate NADPH: Thr11, Gly12, Ser13, Ile14, and Asn125. Residue Lys126 participates in 1-deoxy-D-xylulose 5-phosphate binding. Glu127 contacts NADPH. Residue Asp151 participates in Mn(2+) binding. 1-deoxy-D-xylulose 5-phosphate-binding residues include Ser152, Glu153, Ser186, and His209. Glu153 is a binding site for Mn(2+). Residue Gly215 coordinates NADPH. Residues Ser222, Asn227, Lys228, and Glu231 each coordinate 1-deoxy-D-xylulose 5-phosphate. Glu231 provides a ligand contact to Mn(2+).

It belongs to the DXR family. Mg(2+) is required as a cofactor. Requires Mn(2+) as cofactor.

The enzyme catalyses 2-C-methyl-D-erythritol 4-phosphate + NADP(+) = 1-deoxy-D-xylulose 5-phosphate + NADPH + H(+). The protein operates within isoprenoid biosynthesis; isopentenyl diphosphate biosynthesis via DXP pathway; isopentenyl diphosphate from 1-deoxy-D-xylulose 5-phosphate: step 1/6. Functionally, catalyzes the NADPH-dependent rearrangement and reduction of 1-deoxy-D-xylulose-5-phosphate (DXP) to 2-C-methyl-D-erythritol 4-phosphate (MEP). In Acinetobacter baumannii (strain ATCC 17978 / DSM 105126 / CIP 53.77 / LMG 1025 / NCDC KC755 / 5377), this protein is 1-deoxy-D-xylulose 5-phosphate reductoisomerase.